A 225-amino-acid polypeptide reads, in one-letter code: Ribose-5-phosphate isomerase A (225 aa).

Residues 32–35 (TGST), 85–88 (DGAD), and 98–101 (KGGG) contribute to the substrate site. E107 acts as the Proton acceptor in catalysis. K125 contributes to the substrate binding site.

It belongs to the ribose 5-phosphate isomerase family. As to quaternary structure, homodimer.

The catalysed reaction is aldehydo-D-ribose 5-phosphate = D-ribulose 5-phosphate. It functions in the pathway carbohydrate degradation; pentose phosphate pathway; D-ribose 5-phosphate from D-ribulose 5-phosphate (non-oxidative stage): step 1/1. Its function is as follows. Catalyzes the reversible conversion of ribose-5-phosphate to ribulose 5-phosphate. In Marinobacter nauticus (strain ATCC 700491 / DSM 11845 / VT8) (Marinobacter aquaeolei), this protein is Ribose-5-phosphate isomerase A.